Here is a 690-residue protein sequence, read N- to C-terminus: DNA ligase (690 aa).

NAD(+) is bound by residues 43–47, 92–93, and Glu-129; these read DAEYD and SI. Lys-131 serves as the catalytic N6-AMP-lysine intermediate. 4 residues coordinate NAD(+): Arg-152, Glu-188, Lys-309, and Lys-333. Zn(2+)-binding residues include Cys-427, Cys-430, Cys-445, and Cys-451. One can recognise a BRCT domain in the interval 610–690; that stretch reads VTPTPLSGKT…GLKELLDGHS (81 aa).

The protein belongs to the NAD-dependent DNA ligase family. LigA subfamily. The cofactor is Mg(2+). Mn(2+) is required as a cofactor.

The catalysed reaction is NAD(+) + (deoxyribonucleotide)n-3'-hydroxyl + 5'-phospho-(deoxyribonucleotide)m = (deoxyribonucleotide)n+m + AMP + beta-nicotinamide D-nucleotide.. In terms of biological role, DNA ligase that catalyzes the formation of phosphodiester linkages between 5'-phosphoryl and 3'-hydroxyl groups in double-stranded DNA using NAD as a coenzyme and as the energy source for the reaction. It is essential for DNA replication and repair of damaged DNA. The polypeptide is DNA ligase (Albidiferax ferrireducens (strain ATCC BAA-621 / DSM 15236 / T118) (Rhodoferax ferrireducens)).